The following is a 223-amino-acid chain: Cytidylate kinase (223 aa).

12-20 (GPSGVGKGT) is an ATP binding site.

The protein belongs to the cytidylate kinase family. Type 1 subfamily.

Its subcellular location is the cytoplasm. The enzyme catalyses CMP + ATP = CDP + ADP. The catalysed reaction is dCMP + ATP = dCDP + ADP. The chain is Cytidylate kinase from Xylella fastidiosa (strain 9a5c).